The chain runs to 228 residues: Prophenin-2 (228 aa).

Residues 1 to 29 form the signal peptide; the sequence is METQRASLCLGRWSLWLLLLALVVPSASA. Residues 30–146 constitute a propeptide that is removed on maturation; it reads QALSYREAVL…FLRRPRLRRQ (117 aa). 2 disulfides stabilise this stretch: Cys-85-Cys-96 and Cys-107-Cys-124. Repeat copies occupy residues 148–157, 158–167, 168–177, 178–187, 188–197, 198–207, and 208–217. The 7 X 10 AA tandem repeats stretch occupies residues 148-217; the sequence is FPPPNVPGPR…FPPPPPFRPP (70 aa). Disordered stretches follow at residues 167–195 and 207–228; these read RFPP…NFPG and WFPP…PGRR. Pro-225 bears the Proline amide mark. Positions 226–228 are cleaved as a propeptide — removed in mature form; that stretch reads GRR.

This sequence belongs to the cathelicidin family.

The protein resides in the secreted. In terms of biological role, exerts antimicrobial activity. It is more effective against Gram-negative bacteria than Gram-positive bacteria. In Sus scrofa (Pig), this protein is Prophenin-2.